A 259-amino-acid polypeptide reads, in one-letter code: MSKPLILVCNDDGIFSVGIRTLIEVMSELGEVVVVAPDSPQSGMGHAITIGNTLRLEASDLFPGIVAYECSGTPADCVKLAKHHVLKGRKPDLVVSGINHGSNSSISVLYSGTMSAAIEAALEGLPAIGFSLCDYNAHADFSHVKAFVKQIASEVLTNGIAKGITLNVNFPAVINAPLKGIKICRQAHARWEEKFDERFDPYGRRYFWMAGSFENKDAGEDTDEWALANGYVSVVPCSYDLTAHQLLGQLNRDWKFIHE.

Residues aspartate 11, aspartate 12, serine 42, and asparagine 99 each coordinate a divalent metal cation.

This sequence belongs to the SurE nucleotidase family. Requires a divalent metal cation as cofactor.

The protein localises to the cytoplasm. It carries out the reaction a ribonucleoside 5'-phosphate + H2O = a ribonucleoside + phosphate. In terms of biological role, nucleotidase that shows phosphatase activity on nucleoside 5'-monophosphates. The protein is 5'-nucleotidase SurE of Cytophaga hutchinsonii (strain ATCC 33406 / DSM 1761 / CIP 103989 / NBRC 15051 / NCIMB 9469 / D465).